Here is a 690-residue protein sequence, read N- to C-terminus: Elongation factor G (690 aa).

Residues 8-282 (KMTRNIGIMA…AVIDYLPSPL (275 aa)) enclose the tr-type G domain. Residues 17-24 (AHIDAGKT), 81-85 (DTPGH), and 135-138 (NKMD) each bind GTP.

Belongs to the TRAFAC class translation factor GTPase superfamily. Classic translation factor GTPase family. EF-G/EF-2 subfamily.

Its subcellular location is the cytoplasm. In terms of biological role, catalyzes the GTP-dependent ribosomal translocation step during translation elongation. During this step, the ribosome changes from the pre-translocational (PRE) to the post-translocational (POST) state as the newly formed A-site-bound peptidyl-tRNA and P-site-bound deacylated tRNA move to the P and E sites, respectively. Catalyzes the coordinated movement of the two tRNA molecules, the mRNA and conformational changes in the ribosome. The chain is Elongation factor G from Acholeplasma laidlawii (strain PG-8A).